Reading from the N-terminus, the 110-residue chain is Snake venom vascular endothelial growth factor toxin ICPP (110 aa).

At Q1 the chain carries Pyrrolidone carboxylic acid. Cystine bridges form between C14/C56, C45/C91, and C49/C93.

Homodimer; disulfide-linked. Interacts with high affinity with KDR/VEGFR-2, and with a lower affinity with neuropilin-1 (NRP1) and neuropilin-2 (NRP2). Expressed by the venom gland.

The protein resides in the secreted. Snake venom VEGFs may contribute to venom dispersion and prey subjugation by inducing vascular permeability and hypotension. This protein increases vascular permeability and angiogenesis probably through VEGF receptor (KDR/VEGFR-2) signaling. Induces DNA synthesis in human umbilical vein endothelial cells, and promotes mouse embryonic stem cell proliferation and differentiation. It may also induce a drastic hypotensive effect after intravenous injection. The hypotension is mediated by nitric oxide (NO), which is produced by VEGF-activated endothelium NO synthase. This is Snake venom vascular endothelial growth factor toxin ICPP from Macrovipera lebetinus (Levantine viper).